The sequence spans 682 residues: MHNTLDKSEAKERVTFLRNELHRHNHLYYIKDAPEISDAEYDRLFRELAELEALHPDLADPASPTARVGAPPTGDLATVTRTIPMLSISNAFADEELFKFDERVRRSLQTGDPVTYLAEPKLDGTAVELVYEKGRLVMAATRGDGVTGEVITPNARTIGSVPLHLTGDAVPMPNLLEVRGEVVMTKEGFEKLNALRLERDEPLFANARNAAAGSLRQLDSRVTASRPLTLIAYGIGRFSEIDAISTQHEIVTRLADFGFKTNSHVRWDLDIKGVIDFYRFLEGIRPSLPYDIDGMVVKVDRLDFQRTLGATSRSPRWVIAYKFAASQETTRLVAIDVQVGRTGALTPVALLEPVTIGGVTVSRATLHNEDEIARKDIRVGDAVLVQRAGDVIPEVVQVITGRRTGNETPFQMPATCPVCGTPVVREPSEAVTRCVNAACPAQVKERIKHFAAKGAFDIDGLGDKLVDQLVDRGMIASYADLFTLRVEDLESLDRMGFKSAQNLVAAIEKSRHITFDAFLYGLGMRHVGAHVATLLARAFPGIDQLAEAALAGQLNSIDGIGGVIAESVKNFFSNPENRQTVDSLINHGVALQFPEKEAATGHEMPLAGKTFVLTGTLEKMTRDQARQRIEAAGGKVTGSVSSRTDYVVAGEAPGSKRDKAEALGVAILDEAGLLSLLEPGER.

NAD(+) is bound by residues D38 to D42, S87 to I88, and E119. K121 functions as the N6-AMP-lysine intermediate in the catalytic mechanism. The NAD(+) site is built by R142, E181, K298, and K322. Residues C416, C419, C434, and C439 each contribute to the Zn(2+) site. The BRCT domain maps to G601–R682.

The protein belongs to the NAD-dependent DNA ligase family. LigA subfamily. The cofactor is Mg(2+). Mn(2+) serves as cofactor.

The enzyme catalyses NAD(+) + (deoxyribonucleotide)n-3'-hydroxyl + 5'-phospho-(deoxyribonucleotide)m = (deoxyribonucleotide)n+m + AMP + beta-nicotinamide D-nucleotide.. In terms of biological role, DNA ligase that catalyzes the formation of phosphodiester linkages between 5'-phosphoryl and 3'-hydroxyl groups in double-stranded DNA using NAD as a coenzyme and as the energy source for the reaction. It is essential for DNA replication and repair of damaged DNA. In Desulfosudis oleivorans (strain DSM 6200 / JCM 39069 / Hxd3) (Desulfococcus oleovorans), this protein is DNA ligase.